Reading from the N-terminus, the 579-residue chain is SLAIN motif-containing protein 1 (579 aa).

Disordered stretches follow at residues 1-21 (MMAEQVKCASPVAASGAGPGP), 60-95 (LLLQPPPPSAPPPAGACSPLATHRAPASTTSPGPGA), 135-162 (GGGGSPEPGTAGTPPGEAATPPLPPPTL), 233-258 (YTSRGSPLSPQSSIDSELSTSELEDD), 289-313 (STSASVSRNSSSVSLSSGKKGTCSD), and 347-454 (IPHS…PGQI). Residues 9 to 21 (ASPVAASGAGPGP) are compositionally biased toward low complexity. A coiled-coil region spans residues 21-56 (PVVNAELEVKKLQELVRKLEKQNEQLRSRAASAAAA). Residues 63–73 (QPPPPSAPPPA) show a composition bias toward pro residues. The segment covering 141-154 (EPGTAGTPPGEAAT) has biased composition (low complexity). Residues 233-243 (YTSRGSPLSPQ) show a composition bias toward polar residues. Ser-241 is subject to Phosphoserine. 2 stretches are compositionally biased toward low complexity: residues 244-253 (SSIDSELSTS) and 289-305 (STSASVSRNSSSVSLSS). The segment covering 362–373 (SPSTQYFPSNNF) has biased composition (polar residues). A compositionally biased stretch (low complexity) spans 374-390 (QQPQYYPPQAQTADQQP). A compositionally biased stretch (polar residues) spans 412-432 (AAASSNLSSPVTVRSSQSFDS). Arg-469 is modified (asymmetric dimethylarginine). A disordered region spans residues 479 to 516 (SPTVQGSSSSGSSGSSGGSGSGMPLSNGTQLYSTTGIP). The span at 502 to 516 (PLSNGTQLYSTTGIP) shows a compositional bias: polar residues. At Arg-554 the chain carries Asymmetric dimethylarginine.

It belongs to the SLAIN motif-containing family. As to quaternary structure, interacts with MAPRE1, MAPRE2, MAPRE3 and CKAP5. Interacts with ZDHHC17 (via ANK repeats). In terms of tissue distribution, expressed in embryonic stem cells. Expressed in adult bone marrow, brain, kidney, lung, testis and thymus. Expressed in colon. Isoform 1 is highly expressed in brain. Isoform 2 is more widely expressed in bone marrow, brain, colon, kidney, lung and thymus.

The protein localises to the cytoplasm. It localises to the cytoskeleton. In terms of biological role, microtubule plus-end tracking protein that might be involved in the regulation of cytoplasmic microtubule dynamics, microtubule organization and microtubule elongation. The chain is SLAIN motif-containing protein 1 (Slain1) from Mus musculus (Mouse).